The following is a 156-amino-acid chain: Small ribosomal subunit protein uS7 (156 aa).

Belongs to the universal ribosomal protein uS7 family. Part of the 30S ribosomal subunit. Contacts proteins S9 and S11.

Functionally, one of the primary rRNA binding proteins, it binds directly to 16S rRNA where it nucleates assembly of the head domain of the 30S subunit. Is located at the subunit interface close to the decoding center, probably blocks exit of the E-site tRNA. In Gloeobacter violaceus (strain ATCC 29082 / PCC 7421), this protein is Small ribosomal subunit protein uS7.